A 34-amino-acid chain; its full sequence is Photosystem II reaction center protein M (34 aa).

A helical membrane pass occupies residues 5 to 25 (ILAFIATALFILIPTAFLLII).

Belongs to the PsbM family. As to quaternary structure, PSII is composed of 1 copy each of membrane proteins PsbA, PsbB, PsbC, PsbD, PsbE, PsbF, PsbH, PsbI, PsbJ, PsbK, PsbL, PsbM, PsbT, PsbX, PsbY, PsbZ, Psb30/Ycf12, at least 3 peripheral proteins of the oxygen-evolving complex and a large number of cofactors. It forms dimeric complexes.

It localises to the plastid. It is found in the chloroplast thylakoid membrane. In terms of biological role, one of the components of the core complex of photosystem II (PSII). PSII is a light-driven water:plastoquinone oxidoreductase that uses light energy to abstract electrons from H(2)O, generating O(2) and a proton gradient subsequently used for ATP formation. It consists of a core antenna complex that captures photons, and an electron transfer chain that converts photonic excitation into a charge separation. This subunit is found at the monomer-monomer interface. This chain is Photosystem II reaction center protein M, found in Lolium perenne (Perennial ryegrass).